We begin with the raw amino-acid sequence, 273 residues long: Dermonecrotic toxin LdSicTox-alphaIB1av (273 aa).

Histidine 5 is an active-site residue. 2 residues coordinate Mg(2+): glutamate 25 and aspartate 27. Residue histidine 41 is the Nucleophile of the active site. Disulfide bonds link cysteine 45–cysteine 51 and cysteine 47–cysteine 190. Aspartate 85 is a Mg(2+) binding site. N-linked (GlcNAc...) asparagine glycosylation occurs at asparagine 250.

This sequence belongs to the arthropod phospholipase D family. Class II subfamily. Mg(2+) serves as cofactor. As to expression, expressed by the venom gland.

It localises to the secreted. It catalyses the reaction an N-(acyl)-sphingosylphosphocholine = an N-(acyl)-sphingosyl-1,3-cyclic phosphate + choline. The catalysed reaction is an N-(acyl)-sphingosylphosphoethanolamine = an N-(acyl)-sphingosyl-1,3-cyclic phosphate + ethanolamine. It carries out the reaction a 1-acyl-sn-glycero-3-phosphocholine = a 1-acyl-sn-glycero-2,3-cyclic phosphate + choline. The enzyme catalyses a 1-acyl-sn-glycero-3-phosphoethanolamine = a 1-acyl-sn-glycero-2,3-cyclic phosphate + ethanolamine. Its function is as follows. Dermonecrotic toxins cleave the phosphodiester linkage between the phosphate and headgroup of certain phospholipids (sphingolipid and lysolipid substrates), forming an alcohol (often choline) and a cyclic phosphate. This toxin acts on sphingomyelin (SM). It may also act on ceramide phosphoethanolamine (CPE), lysophosphatidylcholine (LPC) and lysophosphatidylethanolamine (LPE), but not on lysophosphatidylserine (LPS), and lysophosphatidylglycerol (LPG). It acts by transphosphatidylation, releasing exclusively cyclic phosphate products as second products. Induces dermonecrosis, hemolysis, increased vascular permeability, edema, inflammatory response, and platelet aggregation. This Loxosceles deserta (Desert recluse spider) protein is Dermonecrotic toxin LdSicTox-alphaIB1av.